A 119-amino-acid polypeptide reads, in one-letter code: Large ribosomal subunit protein uL14 (119 aa).

Belongs to the universal ribosomal protein uL14 family. In terms of assembly, part of the 50S ribosomal subunit. Forms a cluster with proteins L3 and L19. In the 70S ribosome, L14 and L19 interact and together make contacts with the 16S rRNA in bridges B5 and B8.

Binds to 23S rRNA. Forms part of two intersubunit bridges in the 70S ribosome. This is Large ribosomal subunit protein uL14 from Neorickettsia sennetsu (strain ATCC VR-367 / Miyayama) (Ehrlichia sennetsu).